The sequence spans 563 residues: Germacrene-A synthase (563 aa).

Mg(2+) is bound by residues D316, D320, D460, T464, and E468. The DDXXD motif motif lies at 316-320; the sequence is DDTYD.

The protein belongs to the terpene synthase family. Tpsa subfamily. The cofactor is Mg(2+). Requires Mn(2+) as cofactor. As to expression, high expression in disk florets, moderate expression in ray florets and detected in leaves and stems, but not in roots.

It carries out the reaction (2E,6E)-farnesyl diphosphate = (+)-(R)-germacrene A + diphosphate. The protein operates within secondary metabolite biosynthesis; terpenoid biosynthesis. Sesquiterpene synthase involved in germacrene A biosynthesis. May be involved in the biosynthesis of the sesquiterpene lactone matricine, one of the major active compounds of chamomile flowers. The chain is Germacrene-A synthase from Matricaria chamomilla var. recutita (German chamomile).